We begin with the raw amino-acid sequence, 395 residues long: uncharacterized protein (395 aa).

A disordered region spans residues 115-144 (TKPPTEGGPEKDQSSPSQTQAAPQGPSTAS). Low complexity predominate over residues 128-141 (SSPSQTQAAPQGPS).

This is an uncharacterized protein from Homo sapiens (Human).